A 468-amino-acid polypeptide reads, in one-letter code: Cysteine--tRNA ligase (468 aa).

Residue cysteine 28 participates in Zn(2+) binding. The short motif at 30-40 is the 'HIGH' region element; it reads PTVYNYIHIGN. Residues cysteine 212, histidine 237, and glutamate 241 each coordinate Zn(2+). Positions 271–275 match the 'KMSKS' region motif; it reads KMSKS. Lysine 274 is an ATP binding site.

This sequence belongs to the class-I aminoacyl-tRNA synthetase family. In terms of assembly, monomer. The cofactor is Zn(2+).

It is found in the cytoplasm. It carries out the reaction tRNA(Cys) + L-cysteine + ATP = L-cysteinyl-tRNA(Cys) + AMP + diphosphate. The polypeptide is Cysteine--tRNA ligase (Latilactobacillus sakei subsp. sakei (strain 23K) (Lactobacillus sakei subsp. sakei)).